The sequence spans 137 residues: Large ribosomal subunit protein uL16 (137 aa).

It belongs to the universal ribosomal protein uL16 family. In terms of assembly, part of the 50S ribosomal subunit.

Binds 23S rRNA and is also seen to make contacts with the A and possibly P site tRNAs. The sequence is that of Large ribosomal subunit protein uL16 from Bartonella henselae (strain ATCC 49882 / DSM 28221 / CCUG 30454 / Houston 1) (Rochalimaea henselae).